Consider the following 117-residue polypeptide: Large ribosomal subunit protein bL20 (117 aa).

This sequence belongs to the bacterial ribosomal protein bL20 family.

Its function is as follows. Binds directly to 23S ribosomal RNA and is necessary for the in vitro assembly process of the 50S ribosomal subunit. It is not involved in the protein synthesizing functions of that subunit. This chain is Large ribosomal subunit protein bL20, found in Actinobacillus pleuropneumoniae serotype 7 (strain AP76).